We begin with the raw amino-acid sequence, 218 residues long: TPA-induced transmembrane protein homolog (218 aa).

The segment at 1-54 is disordered; the sequence is MEEGSRSQSPREELELSMLDGPQEELTPLNNDLRIQPNSAEDPSPAQVGKESPW. The chain crosses the membrane as a helical span at residues 66–86; it reads KLWMVIVTIFLCFIIVIVISL.

It is found in the endoplasmic reticulum membrane. In Mus musculus (Mouse), this protein is TPA-induced transmembrane protein homolog.